We begin with the raw amino-acid sequence, 594 residues long: Apolipoprotein N-acyltransferase (594 aa).

Acidic residues predominate over residues 1–29; it reads MIPAVTDDDPLEDPLDDDVAPGLDDAEPE. Positions 1-48 are disordered; sequence MIPAVTDDDPLEDPLDDDVAPGLDDAEPEPEPRDEHDEPSRPATGSRI. Residues 1–67 are Cytoplasmic-facing; it reads MIPAVTDDDP…RFGKGVLDRC (67 aa). A compositionally biased stretch (basic and acidic residues) spans 30-40; sequence PEPRDEHDEPS. Residues 68–87 traverse the membrane as a helical segment; the sequence is APLSAAIGGGLALWLSFPPI. The Extracellular segment spans residues 88-116; it reads GWWFTAFPGLALLGWVLTRTATTKAGGFG. The helical transmembrane segment at 117–134 threads the bilayer; sequence YGVLFGLAFYVPLLPWIS. Topologically, residues 135–138 are cytoplasmic; that stretch reads GLVG. The chain crosses the membrane as a helical span at residues 139-160; it reads AVPWLALAFAESLFCGLFGLGA. The Extracellular portion of the chain corresponds to 161–221; the sequence is VVVVRLPGWP…IGGAPLVSFA (61 aa). The helical transmembrane segment at 222-239 threads the bilayer; it reads VALIGFSLTLLTAQIVWW. At 240–251 the chain is on the cytoplasmic side; that stretch reads WRHGHKPGVPAP. Residues 252-269 form a helical membrane-spanning segment; sequence AVMLPGVAIAASLLVTAL. The Extracellular segment spans residues 270-554; the sequence is VWPQVRQSGT…TDLTPATKWG (285 aa). The CN hydrolase domain maps to 287 to 543; the sequence is VTVAAVQGNV…PAYLDNQIRL (257 aa). Glu-340 (proton acceptor) is an active-site residue. The active site involves Lys-405. Cys-455 serves as the catalytic Nucleophile. Residues 555–572 traverse the membrane as a helical segment; that stretch reads PIVQAVLVIAGVAVLLIA. Residues 573–594 are Cytoplasmic-facing; it reads ILHNGRFAPRMLRRRSATTVKR.

Belongs to the CN hydrolase family. Apolipoprotein N-acyltransferase subfamily. Interacts with Ppm1 (AC A0QZ12) upon coexpression in E.coli, which increases the PPM synthase activity of Ppm1.

It is found in the cell membrane. The catalysed reaction is N-terminal S-1,2-diacyl-sn-glyceryl-L-cysteinyl-[lipoprotein] + a glycerophospholipid = N-acyl-S-1,2-diacyl-sn-glyceryl-L-cysteinyl-[lipoprotein] + a 2-acyl-sn-glycero-3-phospholipid + H(+). Its pathway is protein modification; lipoprotein biosynthesis (N-acyl transfer). Functionally, catalyzes the phospholipid dependent N-acylation of the N-terminal cysteine of apolipoprotein, the last step in lipoprotein maturation. Can transfer a number of fatty acids (C16 and C19, palmitic and probably tuberculostearic acids respectively are shown). Enhances the polyprenol monophosphomannose (PPM) synthase activity of Ppm1 (AC A0QZ12) without itself having PPM synthase catalytic activity. The sequence is that of Apolipoprotein N-acyltransferase from Mycolicibacterium smegmatis (strain ATCC 700084 / mc(2)155) (Mycobacterium smegmatis).